Consider the following 473-residue polypeptide: Photosystem II CP43 reaction center protein (473 aa).

Residues 1-14 (MKTLYSLRRFYPVE) constitute a propeptide that is removed on maturation. N-acetylthreonine is present on T15. A Phosphothreonine modification is found at T15. The next 5 membrane-spanning stretches (helical) occupy residues 69-93 (LFEV…PHLA), 134-155 (LLGP…KDRN), 178-200 (KALY…RKIT), 255-275 (KPFA…LSYS), and 291-312 (WFNN…ASQA). A [CaMn4O5] cluster-binding site is contributed by E367. The helical transmembrane segment at 447–471 (RARAAAAGFEKGIDRDFEPVLFMTP) threads the bilayer.

The protein belongs to the PsbB/PsbC family. PsbC subfamily. In terms of assembly, PSII is composed of 1 copy each of membrane proteins PsbA, PsbB, PsbC, PsbD, PsbE, PsbF, PsbH, PsbI, PsbJ, PsbK, PsbL, PsbM, PsbT, PsbX, PsbY, PsbZ, Psb30/Ycf12, at least 3 peripheral proteins of the oxygen-evolving complex and a large number of cofactors. It forms dimeric complexes. Binds multiple chlorophylls and provides some of the ligands for the Ca-4Mn-5O cluster of the oxygen-evolving complex. It may also provide a ligand for a Cl- that is required for oxygen evolution. PSII binds additional chlorophylls, carotenoids and specific lipids. serves as cofactor.

The protein resides in the plastid. The protein localises to the chloroplast thylakoid membrane. One of the components of the core complex of photosystem II (PSII). It binds chlorophyll and helps catalyze the primary light-induced photochemical processes of PSII. PSII is a light-driven water:plastoquinone oxidoreductase, using light energy to abstract electrons from H(2)O, generating O(2) and a proton gradient subsequently used for ATP formation. The sequence is that of Photosystem II CP43 reaction center protein from Cucumis sativus (Cucumber).